Consider the following 143-residue polypeptide: Hemoglobin cathodic subunit alpha (143 aa).

Serine 2 is modified (N-acetylserine). The Globin domain maps to 2–143; it reads SLTAKDKTLV…VSAALADKYR (142 aa). Histidine 59 is an O2 binding site. Residue histidine 89 coordinates heme b.

This sequence belongs to the globin family. Heterotetramer of two alpha chains and two beta chains. As to expression, red blood cells.

Its function is as follows. Involved in oxygen transport from the gills to the various peripheral tissues. This Conger conger (Conger eel) protein is Hemoglobin cathodic subunit alpha.